The chain runs to 320 residues: o-succinylbenzoate synthase (320 aa).

The Proton donor role is filled by Lys133. Positions 161, 190, and 213 each coordinate Mg(2+). Catalysis depends on Lys235, which acts as the Proton acceptor.

Belongs to the mandelate racemase/muconate lactonizing enzyme family. MenC type 1 subfamily. Requires a divalent metal cation as cofactor.

It catalyses the reaction (1R,6R)-6-hydroxy-2-succinyl-cyclohexa-2,4-diene-1-carboxylate = 2-succinylbenzoate + H2O. It participates in quinol/quinone metabolism; 1,4-dihydroxy-2-naphthoate biosynthesis; 1,4-dihydroxy-2-naphthoate from chorismate: step 4/7. It functions in the pathway quinol/quinone metabolism; menaquinone biosynthesis. Its function is as follows. Converts 2-succinyl-6-hydroxy-2,4-cyclohexadiene-1-carboxylate (SHCHC) to 2-succinylbenzoate (OSB). This chain is o-succinylbenzoate synthase, found in Escherichia coli O7:K1 (strain IAI39 / ExPEC).